The sequence spans 938 residues: Kinesin-like protein KIN-7B (938 aa).

The Kinesin motor domain occupies 29 to 348 (KILVTVRMRP…LSFAMSAKEV (320 aa)). 113 to 120 (GQTSSGKT) lines the ATP pocket. A coiled-coil region spans residues 357–431 (VVSEKKLLKH…DLERKAKERK (75 aa)). The segment at 450-481 (TKEESIPSKSVPSSRRTARDRRKDNVRQSLTS) is disordered. Positions 555-590 (KANLKEEINRLNSQEIAALEKKLECVQNTIDMLVSS) form a coiled coil. The disordered stretch occupies residues 628-678 (CSPLSGTENKDPESNVVSANSAPVSFGATPPKRDDNRCRTQSREGTPVSRQ). Low complexity predominate over residues 641–652 (SNVVSANSAPVS). Over residues 658–669 (PKRDDNRCRTQS) the composition is skewed to basic and acidic residues.

Belongs to the TRAFAC class myosin-kinesin ATPase superfamily. Kinesin family. KIN-7 subfamily. Interacts with ANP3. Interacts with TIO/FU. In terms of tissue distribution, expressed in roots, stems, flowers, pollen mother cells and embryos.

It localises to the cytoplasm. Its subcellular location is the cytoskeleton. It is found in the phragmoplast. Probable plus end-directed motor protein that functions in the NACK-PQR (ANP3-MKK6-MPK4) MAP kinase signaling pathway, which is essential for somatic cell cytokinesis, especially for the cell-plate formation and its expansion. May regulate the activity and the localization of ANP3, probably by association through the non-catalytic region of the kinase. Functionally redundant with NACK1 and essential to promote the progression of cytokinesis and for cellularization (formation of the cell plate) during microgametogenesis and megagametogenesis. In Arabidopsis thaliana (Mouse-ear cress), this protein is Kinesin-like protein KIN-7B.